Reading from the N-terminus, the 155-residue chain is Small ribosomal subunit protein uS7c (155 aa).

Belongs to the universal ribosomal protein uS7 family. As to quaternary structure, part of the 30S ribosomal subunit.

The protein localises to the plastid. Its subcellular location is the chloroplast. One of the primary rRNA binding proteins, it binds directly to 16S rRNA where it nucleates assembly of the head domain of the 30S subunit. This is Small ribosomal subunit protein uS7c (rps7) from Typha angustifolia (Narrow leaf cattail).